Consider the following 197-residue polypeptide: Xanthine phosphoribosyltransferase (197 aa).

Xanthine is bound by residues L20 and N27. 5-phospho-alpha-D-ribose 1-diphosphate is bound at residue 128–132 (ANGQA). K156 lines the xanthine pocket.

It belongs to the purine/pyrimidine phosphoribosyltransferase family. Xpt subfamily. In terms of assembly, homodimer.

The protein resides in the cytoplasm. The catalysed reaction is XMP + diphosphate = xanthine + 5-phospho-alpha-D-ribose 1-diphosphate. It functions in the pathway purine metabolism; XMP biosynthesis via salvage pathway; XMP from xanthine: step 1/1. In terms of biological role, converts the preformed base xanthine, a product of nucleic acid breakdown, to xanthosine 5'-monophosphate (XMP), so it can be reused for RNA or DNA synthesis. The polypeptide is Xanthine phosphoribosyltransferase (Bacillus cereus (strain ZK / E33L)).